Reading from the N-terminus, the 601-residue chain is 4-hydroxy-3-methylbut-2-en-1-yl diphosphate synthase (flavodoxin) (601 aa).

Positions 507, 510, 542, and 549 each coordinate [4Fe-4S] cluster.

It belongs to the IspG family. It depends on [4Fe-4S] cluster as a cofactor.

It carries out the reaction (2E)-4-hydroxy-3-methylbut-2-enyl diphosphate + oxidized [flavodoxin] + H2O + 2 H(+) = 2-C-methyl-D-erythritol 2,4-cyclic diphosphate + reduced [flavodoxin]. Its pathway is isoprenoid biosynthesis; isopentenyl diphosphate biosynthesis via DXP pathway; isopentenyl diphosphate from 1-deoxy-D-xylulose 5-phosphate: step 5/6. Its function is as follows. Converts 2C-methyl-D-erythritol 2,4-cyclodiphosphate (ME-2,4cPP) into 1-hydroxy-2-methyl-2-(E)-butenyl 4-diphosphate. This chain is 4-hydroxy-3-methylbut-2-en-1-yl diphosphate synthase (flavodoxin), found in Chlamydia muridarum (strain MoPn / Nigg).